A 629-amino-acid polypeptide reads, in one-letter code: tRNA uridine 5-carboxymethylaminomethyl modification enzyme MnmG (629 aa).

13–18 (GGGHAG) lines the FAD pocket. NAD(+) is bound at residue 273-287 (GPRYCPSIEDKVNRF).

Belongs to the MnmG family. In terms of assembly, homodimer. Heterotetramer of two MnmE and two MnmG subunits. FAD is required as a cofactor.

The protein resides in the cytoplasm. NAD-binding protein involved in the addition of a carboxymethylaminomethyl (cmnm) group at the wobble position (U34) of certain tRNAs, forming tRNA-cmnm(5)s(2)U34. The sequence is that of tRNA uridine 5-carboxymethylaminomethyl modification enzyme MnmG from Shewanella pealeana (strain ATCC 700345 / ANG-SQ1).